Reading from the N-terminus, the 419-residue chain is POU domain, class 4, transcription factor 1 (419 aa).

The short motif at 57-66 (RAEALAAVDI) is the POU-IV box element. Disordered regions lie at residues 94-117 (STVPLAHHHHHHHHHQALEPGDLL) and 131-197 (AGGA…HSLG). Residues 99-108 (AHHHHHHHHH) are compositionally biased toward basic residues. Gly residues predominate over residues 131–184 (AGGAGAAAGGGGAHDGPGGGGGPGGGGGPGGGPGGGGGGGPGGGGGGPGGGLLG). The POU-specific domain occupies 261-338 (SDTDPRELEA…LQAWLEEAEG (78 aa)). Residues 356–415 (KRKRTSIAAPEKRSLEAYFAVQPRPSSEKIAAIAEKLDLKKNVVRVWFCNQRQKQKRMKF) constitute a DNA-binding region (homeobox).

It belongs to the POU transcription factor family. Class-4 subfamily. Interacts (via N-terminus) with RIT2; the interaction controls POU4F1 transactivation activity on some neuronal target genes. Isoform 1 interacts with POU4F2; this interaction inhibits both POU4F1 DNA-binding and transcriptional activities. Isoform 1 interacts (C-terminus) with ESR1 (via DNA-binding domain); this interaction decreases the estrogen receptor ESR1 transcriptional activity in a DNA- and ligand 17-beta-estradiol-independent manner. Expressed in the brain and the retina. Present in the developing brain, spinal cord and eye.

The protein resides in the nucleus. Its subcellular location is the cytoplasm. Functionally, multifunctional transcription factor with different regions mediating its different effects. Acts by binding (via its C-terminal domain) to sequences related to the consensus octamer motif 5'-ATGCAAAT-3' in the regulatory regions of its target genes. Regulates the expression of specific genes involved in differentiation and survival within a subset of neuronal lineages. It has been shown that activation of some of these genes requires its N-terminal domain, maybe through a neuronal-specific cofactor. Activates BCL2 expression and protects neuronal cells from apoptosis (via the N-terminal domain). Induces neuronal process outgrowth and the coordinate expression of genes encoding synaptic proteins. Exerts its major developmental effects in somatosensory neurons and in brainstem nuclei involved in motor control. Stimulates the binding affinity of the nuclear estrogene receptor ESR1 to DNA estrogen response element (ERE), and hence modulates ESR1-induced transcriptional activity. May positively regulate POU4F2 and POU4F3. Regulates dorsal root ganglion sensory neuron specification and axonal projection into the spinal cord. Plays a role in TNFSF11-mediated terminal osteoclast differentiation. Negatively regulates its own expression interacting directly with a highly conserved autoregulatory domain surrounding the transcription initiation site. In terms of biological role, able to act as transcription factor, cannot regulate the expression of the same subset of genes than isoform 1. Does not have antiapoptotic effect on neuronal cells. This is POU domain, class 4, transcription factor 1 from Homo sapiens (Human).